The following is a 227-amino-acid chain: UPF0688 protein C1orf174 homolog (227 aa).

Disordered regions lie at residues 1–122 and 207–227; these read MRKR…VSDL and AKEEDEDDDDYVDGLANEGNI. A compositionally biased stretch (basic and acidic residues) spans 47–63; it reads TEKESSKKLRKDEKGPV. 2 stretches are compositionally biased toward polar residues: residues 77–104 and 113–122; these read AASNESSNVNDSQQSEKSITNTKDNGTR and RLPSSPVSDL.

Belongs to the UPF0688 family.

The protein localises to the nucleus. The protein is UPF0688 protein C1orf174 homolog of Xenopus tropicalis (Western clawed frog).